Consider the following 203-residue polypeptide: ER membrane protein complex subunit 8/9 homolog (203 aa).

An MPN domain is found at 4–140 (YKVSERAYAK…IQVFNCPGDS (137 aa)).

The protein belongs to the EMC8/EMC9 family. In terms of assembly, component of the ER membrane protein complex (EMC).

The protein resides in the endoplasmic reticulum membrane. Functionally, part of the endoplasmic reticulum membrane protein complex (EMC) that enables the energy-independent insertion into endoplasmic reticulum membranes of newly synthesized multi-pass membrane proteins like rhodopsins. This Drosophila melanogaster (Fruit fly) protein is ER membrane protein complex subunit 8/9 homolog.